The sequence spans 337 residues: Glyceraldehyde-3-phosphate dehydrogenase (337 aa).

NAD(+)-binding positions include 12-13 (RI), Asp-34, and Arg-79. D-glyceraldehyde 3-phosphate is bound by residues 150–152 (SCT), Thr-181, 210–211 (TG), and Arg-233. The Nucleophile role is filled by Cys-151. Asn-315 contacts NAD(+).

Belongs to the glyceraldehyde-3-phosphate dehydrogenase family. Homotetramer.

The protein localises to the cytoplasm. It catalyses the reaction D-glyceraldehyde 3-phosphate + phosphate + NAD(+) = (2R)-3-phospho-glyceroyl phosphate + NADH + H(+). The protein operates within carbohydrate degradation; glycolysis; pyruvate from D-glyceraldehyde 3-phosphate: step 1/5. The polypeptide is Glyceraldehyde-3-phosphate dehydrogenase (GPD) (Coccidioides posadasii (strain C735) (Valley fever fungus)).